A 281-amino-acid polypeptide reads, in one-letter code: ATP phosphoribosyltransferase (281 aa).

Belongs to the ATP phosphoribosyltransferase family. Long subfamily. Mg(2+) serves as cofactor.

It localises to the cytoplasm. The enzyme catalyses 1-(5-phospho-beta-D-ribosyl)-ATP + diphosphate = 5-phospho-alpha-D-ribose 1-diphosphate + ATP. It functions in the pathway amino-acid biosynthesis; L-histidine biosynthesis; L-histidine from 5-phospho-alpha-D-ribose 1-diphosphate: step 1/9. Its activity is regulated as follows. Feedback inhibited by histidine. Its function is as follows. Catalyzes the condensation of ATP and 5-phosphoribose 1-diphosphate to form N'-(5'-phosphoribosyl)-ATP (PR-ATP). Has a crucial role in the pathway because the rate of histidine biosynthesis seems to be controlled primarily by regulation of HisG enzymatic activity. The sequence is that of ATP phosphoribosyltransferase from Corynebacterium aurimucosum (strain ATCC 700975 / DSM 44827 / CIP 107346 / CN-1) (Corynebacterium nigricans).